We begin with the raw amino-acid sequence, 178 residues long: Orotate phosphoribosyltransferase (178 aa).

5-phospho-alpha-D-ribose 1-diphosphate is bound by residues Arg-92, Lys-93, Lys-96, and 118 to 126 (EDVITTGSS). Thr-122 and Arg-150 together coordinate orotate.

This sequence belongs to the purine/pyrimidine phosphoribosyltransferase family. PyrE subfamily. As to quaternary structure, homodimer. Mg(2+) is required as a cofactor.

The enzyme catalyses orotidine 5'-phosphate + diphosphate = orotate + 5-phospho-alpha-D-ribose 1-diphosphate. Its pathway is pyrimidine metabolism; UMP biosynthesis via de novo pathway; UMP from orotate: step 1/2. Catalyzes the transfer of a ribosyl phosphate group from 5-phosphoribose 1-diphosphate to orotate, leading to the formation of orotidine monophosphate (OMP). This Archaeoglobus fulgidus (strain ATCC 49558 / DSM 4304 / JCM 9628 / NBRC 100126 / VC-16) protein is Orotate phosphoribosyltransferase.